A 161-amino-acid polypeptide reads, in one-letter code: Cap-associated protein CAF20 (161 aa).

Basic residues predominate over residues 52–72 (HFGRRRSSHHHGRPKIKHNKP). The disordered stretch occupies residues 52–108 (HFGRRRSSHHHGRPKIKHNKPKVTTDSDGWCTFEAKKKGSGEDDEEETETTPTSTVP). 2 positions are modified to phosphoserine: serine 78 and serine 91. 3 positions are modified to phosphothreonine: threonine 99, threonine 101, and threonine 102. At serine 154 the chain carries Phosphoserine.

Belongs to the CAF20 family. In terms of assembly, interacts with TIF45. Post-translationally, phosphorylated by casein kinase II complex (CK2).

Its subcellular location is the cytoplasm. Functionally, acts as an inhibitor of cap-dependent translation. Competes with eIF4G1/TIF4631 and EAP1 for binding to eIF4E/TIF45 and interferes with the formation of the eIF4F complex, inhibiting translation and stabilizing mRNA. Binding affinity for eIF4E/TIF45 is 10-fold less than that of eIF4G1/TIF4631. Required for induction of pseudohyphal growth in response to nitrogen limitation, probably by regulating STE12 translation. This chain is Cap-associated protein CAF20 (CAF20), found in Saccharomyces cerevisiae (strain YJM789) (Baker's yeast).